We begin with the raw amino-acid sequence, 386 residues long: DNA-directed RNA polymerase subunit Rpo1C (386 aa).

The protein belongs to the RNA polymerase beta' chain family. Part of the RNA polymerase complex.

The protein resides in the cytoplasm. It carries out the reaction RNA(n) + a ribonucleoside 5'-triphosphate = RNA(n+1) + diphosphate. Its function is as follows. DNA-dependent RNA polymerase (RNAP) catalyzes the transcription of DNA into RNA using the four ribonucleoside triphosphates as substrates. Forms part of the jaw domain. This chain is DNA-directed RNA polymerase subunit Rpo1C, found in Methanococcus maripaludis (strain C7 / ATCC BAA-1331).